The primary structure comprises 512 residues: rRNA N(6)-adenosine-methyltransferase ZCCHC4 (512 aa).

The Zn(2+) site is built by Cys-39, His-41, Cys-63, Cys-72, Cys-124, Cys-127, His-139, and His-142. The segment at 39 to 81 (CPHGPTLLFVKVNQGKEETRKFYACSACRDRKDCNFFQWEDEK) adopts a GRF-type zinc-finger fold. Residues 171 to 174 (QYLF), Arg-201, Asp-223, 241 to 242 (NM), and Asp-274 contribute to the S-adenosyl-L-methionine site. The interval 335–355 (QVDYDNHALYKHGKTGRKQSP) is regulatory loop. The Zn(2+) site is built by Cys-378, Cys-381, His-391, Cys-392, Cys-395, Cys-398, His-408, Cys-409, Cys-412, Cys-415, His-422, Cys-423, Cys-426, Cys-429, His-434, and Cys-436. Residues 393–445 (VHCNSCTSKDGRKWSHCFLCKKCVKPSWIHCNTCNRCALPDHSCLGPKDGCFI) form the DHHC domain. The CCHC-type zinc finger occupies 441–458 (DGCFICGALDHKRSNCPN).

The protein belongs to the ZCCHC4 family. As to quaternary structure, interacts with components of the ASC-1 complex TRIP4, ASCC1, ASCC2 and ASCC3. Interact with AHCYL1 and AHCYL2. Interact with YTHDC2.

Its subcellular location is the cytoplasm. It is found in the nucleus. The protein localises to the nucleolus. It carries out the reaction adenosine(4220) in 28S rRNA + S-adenosyl-L-methionine = N(6)-methyladenosine(4220) in 28S rRNA + S-adenosyl-L-homocysteine + H(+). In terms of biological role, rRNA N6-methyltransferase that specifically methylates the adenine in position 4220 of 28S rRNA. N6-methylation of adenine(4220) in 28S rRNA is required for translation. The chain is rRNA N(6)-adenosine-methyltransferase ZCCHC4 from Mus musculus (Mouse).